A 297-amino-acid chain; its full sequence is 4-hydroxy-tetrahydrodipicolinate synthase (297 aa).

Residue threonine 50 coordinates pyruvate. The active-site Proton donor/acceptor is the tyrosine 139. The Schiff-base intermediate with substrate role is filled by lysine 167. Residue valine 209 coordinates pyruvate.

The protein belongs to the DapA family. In terms of assembly, homotetramer; dimer of dimers.

It is found in the cytoplasm. The catalysed reaction is L-aspartate 4-semialdehyde + pyruvate = (2S,4S)-4-hydroxy-2,3,4,5-tetrahydrodipicolinate + H2O + H(+). The protein operates within amino-acid biosynthesis; L-lysine biosynthesis via DAP pathway; (S)-tetrahydrodipicolinate from L-aspartate: step 3/4. Catalyzes the condensation of (S)-aspartate-beta-semialdehyde [(S)-ASA] and pyruvate to 4-hydroxy-tetrahydrodipicolinate (HTPA). The chain is 4-hydroxy-tetrahydrodipicolinate synthase from Microcystis aeruginosa (strain NIES-843 / IAM M-2473).